We begin with the raw amino-acid sequence, 326 residues long: Transcription cofactor vestigial-like protein 3 (326 aa).

The segment at 57 to 80 is disordered; it reads VTLPSKQEEEDEEEEEEEKDQPAE. Residue lysine 62 forms a Glycyl lysine isopeptide (Lys-Gly) (interchain with G-Cter in SUMO2) linkage. Over residues 64–75 the composition is skewed to acidic residues; sequence EEEDEEEEEEEK. Residue lysine 126 forms a Glycyl lysine isopeptide (Lys-Gly) (interchain with G-Cter in SUMO2) linkage. Disordered stretches follow at residues 175–203 and 233–256; these read PPGT…PPAV and HAHM…SALD. The segment covering 233 to 249 has biased composition (basic residues); that stretch reads HAHMHHRHRHHHHHHHP.

The protein belongs to the vestigial family. In terms of tissue distribution, enriched in placenta.

It is found in the nucleus. Its function is as follows. May act as a specific coactivator for the mammalian TEFs. This is Transcription cofactor vestigial-like protein 3 (VGLL3) from Homo sapiens (Human).